A 663-amino-acid polypeptide reads, in one-letter code: Beta-galactosidase YesZ (663 aa).

A substrate-binding site is contributed by R107. Residue C111 participates in Zn(2+) binding. N145 is a substrate binding site. Catalysis depends on E146, which acts as the Proton donor. Residues C154, C156, and C159 each coordinate Zn(2+). E297 (nucleophile) is an active-site residue. A substrate-binding site is contributed by 346-349 (EQPH).

Belongs to the glycosyl hydrolase 42 family. In terms of assembly, homotrimer.

It carries out the reaction Hydrolysis of terminal non-reducing beta-D-galactose residues in beta-D-galactosides.. Functionally, may play a role in the degradation of rhamnogalacturonan derived from plant cell walls. This Bacillus licheniformis (strain ATCC 14580 / DSM 13 / JCM 2505 / CCUG 7422 / NBRC 12200 / NCIMB 9375 / NCTC 10341 / NRRL NRS-1264 / Gibson 46) protein is Beta-galactosidase YesZ (yesZ).